We begin with the raw amino-acid sequence, 353 residues long: Mannonate dehydratase (353 aa).

The protein belongs to the mannonate dehydratase family. Fe(2+) serves as cofactor. Mn(2+) is required as a cofactor.

The catalysed reaction is D-mannonate = 2-dehydro-3-deoxy-D-gluconate + H2O. It participates in carbohydrate metabolism; pentose and glucuronate interconversion. Catalyzes the dehydration of D-mannonate. This Burkholderia cenocepacia (strain ATCC BAA-245 / DSM 16553 / LMG 16656 / NCTC 13227 / J2315 / CF5610) (Burkholderia cepacia (strain J2315)) protein is Mannonate dehydratase.